We begin with the raw amino-acid sequence, 896 residues long: Bifunctional glutamine synthetase adenylyltransferase/adenylyl-removing enzyme (896 aa).

The segment at 1–411 is adenylyl removase; the sequence is MSDNRLDTAR…LFNEILSEPE (411 aa). An adenylyl transferase region spans residues 417–896; sequence NSEWQWAWQD…EVFGEEAATV (480 aa).

It belongs to the GlnE family. The cofactor is Mg(2+).

It carries out the reaction [glutamine synthetase]-O(4)-(5'-adenylyl)-L-tyrosine + phosphate = [glutamine synthetase]-L-tyrosine + ADP. It catalyses the reaction [glutamine synthetase]-L-tyrosine + ATP = [glutamine synthetase]-O(4)-(5'-adenylyl)-L-tyrosine + diphosphate. Functionally, involved in the regulation of glutamine synthetase GlnA, a key enzyme in the process to assimilate ammonia. When cellular nitrogen levels are high, the C-terminal adenylyl transferase (AT) inactivates GlnA by covalent transfer of an adenylyl group from ATP to specific tyrosine residue of GlnA, thus reducing its activity. Conversely, when nitrogen levels are low, the N-terminal adenylyl removase (AR) activates GlnA by removing the adenylyl group by phosphorolysis, increasing its activity. The regulatory region of GlnE binds the signal transduction protein PII (GlnB) which indicates the nitrogen status of the cell. The protein is Bifunctional glutamine synthetase adenylyltransferase/adenylyl-removing enzyme of Neisseria meningitidis serogroup B (strain ATCC BAA-335 / MC58).